A 38-amino-acid chain; its full sequence is MRRKVKNTKRHQWRLTHSARSIKRANIMPSNPRGGRRF.

It belongs to the microviridae J protein family.

The protein localises to the virion. Its subcellular location is the host cytoplasm. In terms of biological role, mediates ssDNA packaging into virion, it locates to the internal surface of the capsid, thereby displacing the internal scaffolding protein during virion formation. Additionally, protein ORF8 plays a role in viral attachment to the host cell. This is DNA binding protein ORF8 from Spiroplasma melliferum (SpV4).